Consider the following 105-residue polypeptide: uncharacterized protein (105 aa).

One can recognise a Helicase C-terminal domain in the interval 2 to 42 (QVLIGTKLVTEGIDIKQLMMVIMLDNRLNIIELIQGVGRLR).

Belongs to the helicase family. Yeast subtelomeric Y' repeat subfamily.

This is an uncharacterized protein from Saccharomyces cerevisiae (strain ATCC 204508 / S288c) (Baker's yeast).